Consider the following 787-residue polypeptide: Protocadherin beta-15 (787 aa).

Positions 1-26 are cleaved as a signal peptide; that stretch reads MEPAGERFPEQRQVLILLLLLEVTLA. Over 27 to 690 the chain is Extracellular; it reads GWEPRRYSVM…AQADSLTVYL (664 aa). 5 Cadherin domains span residues 35-133, 138-242, 247-347, 352-451, and 456-561; these read VMEE…SPEF, ITLK…APEF, YEVQ…FPEL, LTSP…APAF, and YTLF…SPFV. N-linked (GlcNAc...) asparagine glycosylation is found at Asn418 and Asn436. A glycan (N-linked (GlcNAc...) asparagine) is linked at Asn567. Residues 568–671 form the Cadherin 6 domain; that stretch reads GSAPCTELVP…LVDGFSQPYL (104 aa). A helical membrane pass occupies residues 691–711; it reads VVALASVSSLFLFSVLLFVAV. The Cytoplasmic portion of the chain corresponds to 712-787; that stretch reads RLCRRSRAAS…DSRRKSEFLE (76 aa).

It localises to the cell membrane. Potential calcium-dependent cell-adhesion protein. May be involved in the establishment and maintenance of specific neuronal connections in the brain. The chain is Protocadherin beta-15 (PCDHB15) from Pan troglodytes (Chimpanzee).